The chain runs to 349 residues: Phosphorylcholine phosphatase (349 aa).

Positions Met-1–Ala-22 are cleaved as a signal peptide. Residue Asp-53 is the Nucleophile of the active site. Mg(2+) is bound by residues Asp-53 and Asp-55. The active-site Proton donor is Asp-55. A disulfide bond links Cys-109 and Cys-116. Residue Asp-284 participates in Mg(2+) binding.

This sequence belongs to the HAD-like hydrolase superfamily. In terms of assembly, monomer. Homodimer. Homotetramer. Mg(2+) serves as cofactor.

The protein localises to the periplasm. The enzyme catalyses phosphocholine + H2O = choline + phosphate. The catalysed reaction is phosphoethanolamine + H2O = ethanolamine + phosphate. With respect to regulation, activity is inhibited by high concentrations of phosphorylcholine, phosphorylethanolamine, choline or betaine. Displays different properties depending on the substrate utilized, the pH conditions as well as the presence or absence of metal ions. At pH 5, activity is inhibited by Al(3+) ions. At pH 7.4, the enzyme cannot catalyze the hydrolysis of pNPP, phosphorylethanolamine is a poor substrate in either the presence or absence of divalent cations, and activity measured with phosphorylcholine is independent of divalent cations or is not inhibited by Al(3+) ions. Mg(2+) produces identical activation at pH 5.0 and 7.4, but Zn(2+) is an activator at pH 5.0 and becomes an inhibitor at pH 7.4. This inhibition at pH 7.4 may be due to a transition from octahedral to tetrahedral coordination geometry, which is produced by hydrolysis of the Zn-hexacoordinated complex. Functionally, catalyzes the hydrolysis of phosphorylcholine (PCho) to produce choline and inorganic phosphate. Can also hydrolyze phosphorylethanolamine and the nonphysiological substrate p-nitrophenylphosphate (pNPP). Shows higher affinity and catalytic efficiency with phosphorylcholine as substrate. Its function is as follows. Is probably involved in virulence. The bacteria may break down various host compounds or host cell membranes through the coordinated action of phospholipase C and phosphocholine phosphatase. The final consequence of the action of these enzymes is an increase of the free choline concentration, which may promote the pathogenicity of P.aeruginosa. The chain is Phosphorylcholine phosphatase from Pseudomonas aeruginosa (strain ATCC 15692 / DSM 22644 / CIP 104116 / JCM 14847 / LMG 12228 / 1C / PRS 101 / PAO1).